Here is a 149-residue protein sequence, read N- to C-terminus: Large ribosomal subunit protein uL13 (149 aa).

This sequence belongs to the universal ribosomal protein uL13 family. As to quaternary structure, part of the 50S ribosomal subunit.

This protein is one of the early assembly proteins of the 50S ribosomal subunit, although it is not seen to bind rRNA by itself. It is important during the early stages of 50S assembly. The protein is Large ribosomal subunit protein uL13 of Gemmatimonas aurantiaca (strain DSM 14586 / JCM 11422 / NBRC 100505 / T-27).